Consider the following 347-residue polypeptide: Probable tRNA N6-adenosine threonylcarbamoyltransferase (347 aa).

A divalent metal cation contacts are provided by His-109, His-113, and Tyr-130. Residues 130 to 134 (YVSGG), Asp-162, Gly-177, Glu-181, and Asn-277 contribute to the substrate site. An a divalent metal cation-binding site is contributed by Asp-305.

The protein belongs to the KAE1 / TsaD family. Component of the EKC/KEOPS complex; the whole complex dimerizes. Requires a divalent metal cation as cofactor.

The protein resides in the cytoplasm. Its subcellular location is the nucleus. It carries out the reaction L-threonylcarbamoyladenylate + adenosine(37) in tRNA = N(6)-L-threonylcarbamoyladenosine(37) in tRNA + AMP + H(+). Its function is as follows. Component of the EKC/KEOPS complex that is required for the formation of a threonylcarbamoyl group on adenosine at position 37 (t(6)A37) in tRNAs that read codons beginning with adenine. The complex is probably involved in the transfer of the threonylcarbamoyl moiety of threonylcarbamoyl-AMP (TC-AMP) to the N6 group of A37. Likely plays a direct catalytic role in this reaction, but requires other protein(s) of the complex to fulfill this activity. The sequence is that of Probable tRNA N6-adenosine threonylcarbamoyltransferase from Drosophila melanogaster (Fruit fly).